We begin with the raw amino-acid sequence, 2549 residues long: Serine/threonine-protein kinase mTOR (2549 aa).

M1 carries the post-translational modification N-acetylmethionine. The segment at 1–651 (MLGTGPAVAT…HVVSQTAVQV (651 aa)) is interaction with NBN. 32 HEAT repeats span residues 16–53 (SSNV…MELR), 55–99 (MSQE…VEGG), 100–137 (NSTR…AMAG), 138–179 (DTFT…AISV), 180–220 (PTFF…LILT), 222–276 (QREP…RISS), 277–313 (MEGE…PRHI), 314–364 (TPFT…CCRD), 365–409 (LMEE…AFTD), 410–445 (TQYL…VAVR), 446–494 (SEFK…RAMG), 495–529 (PGIQ…RQIP), 530–563 (QLKK…GLAH), 564–596 (QLAS…EFEG), 597–636 (HSLT…SIHL), 637–683 (ISGH…DERF), 686–724 (HLAQ…MNPA), 727–766 (MPFL…NAPR), 769–811 (RPYM…VSGL), 814–853 (RKWV…STGY), 857–893 (PYRK…LLGA), 894–942 (LDPY…GNLP), 943–988 (LDEF…KCVQ), 989–1027 (FLPQ…KSHI), 1029–1068 (PYMD…GEFK), 1069–1105 (LYLP…LFGA), 1106–1144 (NLDD…RLTE), 1145–1188 (SLDF…GKKY), 1189–1225 (QIFI…LADE), 1226–1273 (EEDP…GAAR), 1274–1311 (RVSK…QAYN), and 1312–1345 (PMAR…ELAL). The residue at position 567 (S567) is a Phosphoserine. T1162 is modified (phosphothreonine). At K1218 the chain carries N6-acetyllysine. A Phosphoserine modification is found at S1261. TPR repeat units follow at residues 1346–1382 (TSQD…GIVL), 1383–1408 (LGER…QKGP), 1409–1442 (TPAI…HFGE), 1443–1473 (LEIQ…NKED), 1474–1507 (PELM…VNDE), 1508–1541 (TQAK…RDTH), 1542–1574 (DGAF…LDAE), 1575–1614 (LTAM…RREI), 1615–1649 (IRQI…PHED), 1650–1693 (MRTW…PTAH), 1694–1731 (PQVT…AQHA), 1732–1786 (IATE…DRSW), 1787–1846 (YKAW…STEG), 1898–1930 (NNLQ…VKAI), 1931–1970 (QIDT…YHPQ), and 1971–2005 (ALIY…SNTL). An FAT domain is found at 1382–1982 (LLGERAAKCR…IYPLTVASKS (601 aa)). Positions 1662, 1702, and 1749 each coordinate 1D-myo-inositol hexakisphosphate. Residues 1825–1860 (ITNATTAATTAASAAAATSTEGSNSESEAESNENSP) are compositionally biased toward low complexity. The segment at 1825 to 1867 (ITNATTAATTAASAAAATSTEGSNSESEAESNENSPTPSPLQK) is disordered. Positions 2012-2144 (VSEELIRVAI…DLELAVPGTY (133 aa)) are sufficient for interaction with the FKBP1A/rapamycin complex. Residue K2066 forms a Glycyl lysine isopeptide (Lys-Gly) (interchain with G-Cter in ubiquitin) linkage. The 314-residue stretch at 2156–2469 (IAPSLQVITS…GVELGEPAHK (314 aa)) folds into the PI3K/PI4K catalytic domain. The residue at position 2159 (S2159) is a Phosphoserine; by TBK1. Residues 2162-2168 (VITSKQR) are G-loop. Residue T2164 is modified to Phosphothreonine. Positions 2165 and 2167 each coordinate ATP. T2173 is subject to Phosphothreonine; by PKB/AKT1. ATP is bound by residues L2185, K2187, E2190, Y2225, G2238, W2239, V2240, and T2245. The interaction with MLST8 stretch occupies residues 2258–2296 (KILLNIEHRIMLRMAPDYDHLTLMQKVEVFEHAVNNTAG). The segment at 2335 to 2343 (GLGDRHPSN) is catalytic loop. N2343 lines the Mg(2+) pocket. Residues M2345 and I2356 each coordinate ATP. The interval 2355 to 2380 (HIDFGDCFEVAMTREKFPEKIPFRLT) is activation loop. Mg(2+) is bound at residue D2357. Position 2446 is a phosphothreonine; by RPS6KB1 (T2446). At S2448 the chain carries Phosphoserine; by RPS6KB1. Phosphoserine occurs at positions 2478 and 2481. In terms of domain architecture, FATC spans 2517-2549 (DTLDVPTQVELLIKQATSHENLCQCYIGWCPFW).

Belongs to the PI3/PI4-kinase family. Part of the mechanistic target of rapamycin complex 1 (mTORC1) which contains MTOR, MLST8 and RPTOR. The mTORC1 complex is a 1 Md obligate dimer of two stoichiometric heterotetramers with overall dimensions of 290 A x 210 A x 135 A. It has a rhomboid shape and a central cavity, the dimeric interfaces are formed by interlocking interactions between the two MTOR and the two RPTOR subunits. The MLST8 subunit forms distal foot-like protuberances, and contacts only one MTOR within the complex, while the small AKT1S1/PRAS40 localizes to the midsection of the central core, in close proximity to RPTOR. mTORC1 associates with AKT1S1/PRAS40, which inhibits its activity by blocking MTOR substrate-recruitment site. Component of the mechanistic target of rapamycin complex 2 (mTORC2), consisting in two heterotretramers composed of MTOR, MLST8, RICTOR and MAPKAP1/SIN1. Interacts with PLPP7 and PML. Interacts with PRR5 and RICTOR; the interaction is direct within the mTORC2 complex and interaction with RICTOR is enhanced by deubiquitination of RICTOR by USP9X. mTORC1 and mTORC2 associate with DEPTOR, which regulates their activity. Interacts with WAC; WAC positively regulates MTOR activity by promoting the assembly of the TTT complex composed of TELO2, TTI1 and TTI2 and the RUVBL complex composed of RUVBL1 and RUVBL2 into the TTT-RUVBL complex which leads to the dimerization of the mTORC1 complex and its subsequent activation. Interacts with UBQLN1. Interacts with TTI1 and TELO2. Interacts with CLIP1; phosphorylates and regulates CLIP1. Interacts with NBN. Interacts with HTR6. Interacts with BRAT1. Interacts with MEAK7 (via C-terminal domain); the interaction increases upon nutrient stimulation. Interacts with TM4SF5; the interaction is positively regulated by arginine and is negatively regulated by leucine. Interacts with GPR137B. Interacts with NCKAP1L. Interacts with TPCN1 and TPCN2; the interaction is required for TPCN1 and TPCN2 sensitivity to ATP. Interacts with ATP6V1A and with CRYAB, forming a ternary complex. Interacts with SLC38A7; this interaction mediates the recruitment of mTORC1 to the lysosome and its subsequent activation. Interacts with TSPAN8. Autophosphorylates when part of mTORC1 or mTORC2. Phosphorylation at Ser-1261, Ser-2159 and Thr-2164 promotes autophosphorylation. Phosphorylated at Ser-2448 by RPS6KB1. Phosphorylation in the kinase domain modulates the interactions of MTOR with RPTOR and AKT1S1/PRAS40 and leads to increased intrinsic mTORC1 kinase activity. Phosphorylation at Ser-2159 by TBK1 in response to growth factors and pathogen recognition receptors promotes mTORC1 activity. Phosphorylation at Ser-2159 by TBK1 in response to EGF growth factor promotes mTORC2 activity, leading to AKT1 phosphorylation and activation. Phosphorylation at Thr-2173 in the ATP-binding region by AKT1 strongly reduces kinase activity. Post-translationally, ubiquitinated at Lys-2066 by the SCF(FBXO22) complex via 'Lys-27'-linked ubiquitination prevents mTORC1 substrate recruitment.

The protein localises to the lysosome membrane. It is found in the endoplasmic reticulum membrane. It localises to the golgi apparatus membrane. Its subcellular location is the cell membrane. The protein resides in the mitochondrion outer membrane. The protein localises to the cytoplasm. It is found in the nucleus. It localises to the PML body. Its subcellular location is the microsome membrane. The protein resides in the cytoplasmic vesicle. The protein localises to the phagosome. The catalysed reaction is L-seryl-[protein] + ATP = O-phospho-L-seryl-[protein] + ADP + H(+). It catalyses the reaction L-threonyl-[protein] + ATP = O-phospho-L-threonyl-[protein] + ADP + H(+). The enzyme catalyses L-tyrosyl-[protein] + ATP = O-phospho-L-tyrosyl-[protein] + ADP + H(+). Its activity is regulated as follows. The mTORC1 complex is activated in response to nutrients, growth factors or amino acids: activation requires relocalization of the mTORC1 complex to lysosomes that is mediated by the Ragulator complex, SLC38A9, and the Rag GTPases RagA/RRAGA, RagB/RRAGB, RagC/RRAGC and RagD/RRAGD. Activation of mTORC1 by growth factors such as insulin involves AKT1-mediated phosphorylation of TSC1-TSC2, which leads to the activation of the RHEB GTPase a potent activator of the protein kinase activity of mTORC1. Insulin-stimulated and amino acid-dependent phosphorylation at Ser-1261 promotes autophosphorylation and the activation of mTORC1. On the other hand, low cellular energy levels can inhibit mTORC1 through activation of PRKAA1 while hypoxia inhibits mTORC1 through a REDD1-dependent mechanism which may also require PRKAA1. The kinase activity of MTOR within the mTORC1 complex is positively regulated by MLST8. The kinase activity of MTOR is inhibited by DEPTOR and AKT1S1. The non-canonical mTORC1 complex is independent of the RHEB GTPase and specifically mediates phosphorylation of MiT/TFE factors TFEB and TFE3 but not other mTORC1 substrates: it is activated by FLCN, which activates Rag GTPases RagC/RRAGC and RagD/RRAGD. MTOR is the target of the immunosuppressive and anti-cancer drug rapamycin which acts in complex with FKBP1A/FKBP12, and specifically inhibits its kinase activity. mTORC2 is also activated by growth factors, but seems to be nutrient-insensitive. mTORC2 associates and is directly activated by ribosomes. mTORC2 may also be regulated by RHEB but in an indirect manner through the PI3K signaling pathway. Its function is as follows. Serine/threonine protein kinase which is a central regulator of cellular metabolism, growth and survival in response to hormones, growth factors, nutrients, energy and stress signals. MTOR directly or indirectly regulates the phosphorylation of at least 800 proteins. Functions as part of 2 structurally and functionally distinct signaling complexes mTORC1 and mTORC2 (mTOR complex 1 and 2). In response to nutrients, growth factors or amino acids, mTORC1 is recruited to the lysosome membrane and promotes protein, lipid and nucleotide synthesis by phosphorylating key regulators of mRNA translation and ribosome synthesis. This includes phosphorylation of EIF4EBP1 and release of its inhibition toward the elongation initiation factor 4E (eiF4E). Moreover, phosphorylates and activates RPS6KB1 and RPS6KB2 that promote protein synthesis by modulating the activity of their downstream targets including ribosomal protein S6, eukaryotic translation initiation factor EIF4B, and the inhibitor of translation initiation PDCD4. Stimulates the pyrimidine biosynthesis pathway, both by acute regulation through RPS6KB1-mediated phosphorylation of the biosynthetic enzyme CAD, and delayed regulation, through transcriptional enhancement of the pentose phosphate pathway which produces 5-phosphoribosyl-1-pyrophosphate (PRPP), an allosteric activator of CAD at a later step in synthesis, this function is dependent on the mTORC1 complex. Regulates ribosome synthesis by activating RNA polymerase III-dependent transcription through phosphorylation and inhibition of MAF1 an RNA polymerase III-repressor. Activates dormant ribosomes by mediating phosphorylation of SERBP1, leading to SERBP1 inactivation and reactivation of translation. In parallel to protein synthesis, also regulates lipid synthesis through SREBF1/SREBP1 and LPIN1. To maintain energy homeostasis mTORC1 may also regulate mitochondrial biogenesis through regulation of PPARGC1A. In the same time, mTORC1 inhibits catabolic pathways: negatively regulates autophagy through phosphorylation of ULK1. Under nutrient sufficiency, phosphorylates ULK1 at 'Ser-758', disrupting the interaction with AMPK and preventing activation of ULK1. Also prevents autophagy through phosphorylation of the autophagy inhibitor DAP. Also prevents autophagy by phosphorylating RUBCNL/Pacer under nutrient-rich conditions. Prevents autophagy by mediating phosphorylation of AMBRA1, thereby inhibiting AMBRA1 ability to mediate ubiquitination of ULK1 and interaction between AMBRA1 and PPP2CA. mTORC1 exerts a feedback control on upstream growth factor signaling that includes phosphorylation and activation of GRB10 a INSR-dependent signaling suppressor. Among other potential targets mTORC1 may phosphorylate CLIP1 and regulate microtubules. The mTORC1 complex is inhibited in response to starvation and amino acid depletion. The non-canonical mTORC1 complex, which acts independently of RHEB, specifically mediates phosphorylation of MiT/TFE factors TFEB and TFE3 in the presence of nutrients, promoting their cytosolic retention and inactivation. Upon starvation or lysosomal stress, inhibition of mTORC1 induces dephosphorylation and nuclear translocation of TFEB and TFE3, promoting their transcription factor activity. The mTORC1 complex regulates pyroptosis in macrophages by promoting GSDMD oligomerization. MTOR phosphorylates RPTOR which in turn inhibits mTORC1. As part of the mTORC2 complex, MTOR transduces signals from growth factors to pathways involved in proliferation, cytoskeletal organization, lipogenesis and anabolic output. In response to growth factors, mTORC2 phosphorylates and activates AGC protein kinase family members, including AKT (AKT1, AKT2 and AKT3), PKC (PRKCA, PRKCB and PRKCE) and SGK1. In contrast to mTORC1, mTORC2 is nutrient-insensitive. mTORC2 plays a critical role in AKT1 activation by mediating phosphorylation of different sites depending on the context, such as 'Thr-450', 'Ser-473', 'Ser-477' or 'Thr-479', facilitating the phosphorylation of the activation loop of AKT1 on 'Thr-308' by PDPK1/PDK1 which is a prerequisite for full activation. mTORC2 also regulates the phosphorylation of SGK1 at 'Ser-422'. mTORC2 may regulate the actin cytoskeleton, through phosphorylation of PRKCA, PXN and activation of the Rho-type guanine nucleotide exchange factors RHOA and RAC1A or RAC1B. The mTORC2 complex also phosphorylates various proteins involved in insulin signaling, such as FBXW8 and IGF2BP1. May also regulate insulin signaling by acting as a tyrosine protein kinase that catalyzes phosphorylation of IGF1R and INSR. Regulates osteoclastogenesis by adjusting the expression of CEBPB isoforms. Plays an important regulatory role in the circadian clock function; regulates period length and rhythm amplitude of the suprachiasmatic nucleus (SCN) and liver clocks. This chain is Serine/threonine-protein kinase mTOR, found in Mus musculus (Mouse).